Reading from the N-terminus, the 175-residue chain is Vesicle-associated membrane protein-associated protein SCS22 (175 aa).

Residues 1-125 form the MSP domain; it reads MRIVPEKLVF…DDIVFKKIKI (125 aa). Over 1 to 154 the chain is Cytoplasmic; the sequence is MRIVPEKLVF…RAPSAGNGQS (154 aa). Positions 133–152 are disordered; that stretch reads RKPSGNHDAESARAPSAGNG. A helical; Anchor for type IV membrane protein membrane pass occupies residues 155–175; the sequence is LSSRALLIITVIALLVGWIYY.

The protein belongs to the VAMP-associated protein (VAP) (TC 9.B.17) family.

The protein resides in the membrane. In terms of biological role, targets proteins containing a FFAT motif to membranes. Involved in regulation of phospholipid metabolism. This chain is Vesicle-associated membrane protein-associated protein SCS22 (SCS22), found in Saccharomyces cerevisiae (strain ATCC 204508 / S288c) (Baker's yeast).